Here is a 552-residue protein sequence, read N- to C-terminus: HTH-type transcriptional regulator SgrR (552 aa).

Positions 1–116 constitute an HTH marR-type domain; that stretch reads MPSGRLQQQF…LISHLGRSFR (116 aa). Residues 26 to 49 constitute a DNA-binding region (H-T-H motif); the sequence is LNELADLLNCSRRHMRTLLNTMQA. Residues 163–493 are solute-binding; sequence ELEADIAHHW…RDWQDDAAQW (331 aa).

Activates the small RNA gene sgrS under glucose-phosphate stress conditions as well as yfdZ. Represses its own transcription under both stress and non-stress conditions. Might act as a sensor of the intracellular accumulation of phosphoglucose by binding these molecules in its C-terminal solute-binding domain. This Salmonella typhi protein is HTH-type transcriptional regulator SgrR.